Reading from the N-terminus, the 446-residue chain is MREIVHIQAGQCGNQIGTKFWEVISDEHGIDPAGGYVGDSALQLERINVYYNESSSQKYVPRAVLVDLEPGTMDSVRSGPFGQLFRPDNFIFGQTGAGNNWAKGHYTEGAELVDSVLDVVRKECEHCDCLQGFQLTHSLGGGTGSGMGTLLISKIREEYPDRIMNTFSVMPSPKVSDTVVEPYNATLSVHQLVENTDETYCIDNEALYDICFRTLKLTTPTYGDLNHLVSATMSGVTTSLRFPGQLNADLRKLAVNMVPFPRLHFFMPGFAPLTARGSQQYRALTVPELTQQMFDAKNMMAACDPRHGRYLTVATVFRGPMSMKEVDEQMLAIQNKNSSYFVEWIPNNVKVAVCDIPPRGLKMASTFIGNSTAIQELFKRISEQFSAMFRRKAFLHWFTGEGMDEMEFTEAESNMNDLVSEYQQYQEATANDGEEAFEDDEEEINE.

The short motif at 1 to 4 (MREI) is the MREI motif element. Residues Gln11, Glu69, Ser138, Gly142, Thr143, Gly144, Asn204, and Asn226 each contribute to the GTP site. Position 69 (Glu69) interacts with Mg(2+). Position 438 is a 5-glutamyl polyglutamate (Glu438).

It belongs to the tubulin family. Dimer of alpha and beta chains. A typical microtubule is a hollow water-filled tube with an outer diameter of 25 nm and an inner diameter of 15 nM. Alpha-beta heterodimers associate head-to-tail to form protofilaments running lengthwise along the microtubule wall with the beta-tubulin subunit facing the microtubule plus end conferring a structural polarity. Microtubules usually have 13 protofilaments but different protofilament numbers can be found in some organisms and specialized cells. The cofactor is Mg(2+). In terms of processing, some glutamate residues at the C-terminus are polyglycylated, resulting in polyglycine chains on the gamma-carboxyl group. Glycylation is mainly limited to tubulin incorporated into axonemes (cilia and flagella) whereas glutamylation is prevalent in neuronal cells, centrioles, axonemes, and the mitotic spindle. Both modifications can coexist on the same protein on adjacent residues, and lowering polyglycylation levels increases polyglutamylation, and reciprocally. The precise function of polyglycylation is still unclear. Post-translationally, some glutamate residues at the C-terminus are polyglutamylated, resulting in polyglutamate chains on the gamma-carboxyl group. Polyglutamylation plays a key role in microtubule severing by spastin (SPAST). SPAST preferentially recognizes and acts on microtubules decorated with short polyglutamate tails: severing activity by SPAST increases as the number of glutamates per tubulin rises from one to eight, but decreases beyond this glutamylation threshold.

Its subcellular location is the cytoplasm. The protein resides in the cytoskeleton. Its function is as follows. Tubulin is the major constituent of microtubules, a cylinder consisting of laterally associated linear protofilaments composed of alpha- and beta-tubulin heterodimers. Microtubules grow by the addition of GTP-tubulin dimers to the microtubule end, where a stabilizing cap forms. Below the cap, tubulin dimers are in GDP-bound state, owing to GTPase activity of alpha-tubulin. This is Tubulin beta-5 chain from Gallus gallus (Chicken).